We begin with the raw amino-acid sequence, 325 residues long: Ribonucleoside-diphosphate reductase small chain (325 aa).

Fe cation contacts are provided by Asp-74, Glu-105, and His-108. Residue Tyr-112 is part of the active site. 3 residues coordinate Fe cation: Glu-168, Glu-202, and His-205.

The protein belongs to the ribonucleoside diphosphate reductase small chain family. Heterodimer of a large and a small chain. The cofactor is Fe cation.

It carries out the reaction a 2'-deoxyribonucleoside 5'-diphosphate + [thioredoxin]-disulfide + H2O = a ribonucleoside 5'-diphosphate + [thioredoxin]-dithiol. Ribonucleoside-diphosphate reductase holoenzyme provides the precursors necessary for viral DNA synthesis. Allows virus growth in non-dividing cells. Catalyzes the biosynthesis of deoxyribonucleotides from the corresponding ribonucleotides. The polypeptide is Ribonucleoside-diphosphate reductase small chain (Yaba-like disease virus (YLDV)).